The sequence spans 85 residues: U4-theraphotoxin-Hhn1a (85 aa).

The N-terminal stretch at 1–22 (MKVTLIAILTCAAVLVLHTTAA) is a signal peptide. A propeptide spanning residues 23–48 (EELEAESQLMKVGMPDTELAAVDEER) is cleaved from the precursor. 3 cysteine pairs are disulfide-bonded: cysteine 52–cysteine 66, cysteine 56–cysteine 77, and cysteine 71–cysteine 82.

The protein belongs to the neurotoxin 12 (Hwtx-2) family. 02 (Hwtx-2) subfamily. Monomer. In terms of tissue distribution, expressed by the venom gland.

The protein resides in the secreted. In terms of biological role, neurotoxin active on both insects and mammals. This is U4-theraphotoxin-Hhn1a from Cyriopagopus hainanus (Chinese bird spider).